Here is a 671-residue protein sequence, read N- to C-terminus: Vinexin (671 aa).

Glutamine 2 carries the post-translational modification N-acetylalanine. Phosphoserine is present on arginine 6. Disordered stretches follow at residues 46-111 (LNFQ…TKDS), 166-215 (TFEE…RPGA), 249-268 (LETG…EKPS), 295-324 (TRLP…AWSS), and 337-383 (SLSP…KKRK). A compositionally biased stretch (polar residues) spans 88 to 108 (PSASTKIPASQHTQNWSATWT). The region spanning 115-187 (DKRWVKYEGI…GAQQRPAHRP (73 aa)) is the SoHo domain. Serine 348 bears the Phosphoserine mark. The segment covering 359-368 (PSSTRDPSAS) has biased composition (polar residues). 2 consecutive SH3 domains span residues 380–439 (KKRK…VLPA) and 454–515 (LEYG…VSRE). The interval 380–515 (KKRKAARLKF…PASYVQVSRE (136 aa)) is binds to vinculin. The residue at position 395 (serine 395) is a Phosphoserine. Residues 519 to 611 (RLCDDGPQLP…LGTSSPNTSQ (93 aa)) are disordered. Serine 530 carries the phosphoserine; by MAPK1 modification. Residues 535–553 (AAARSARHPSSPSALRSPA) show a composition bias toward low complexity. Phosphoserine is present on residues serine 544, serine 545, serine 547, serine 551, and serine 563. Residues 560-584 (GQTSPRRTGFSFPTQEPRPQTQNLG) are compositionally biased toward polar residues. The SH3 3 domain occupies 612–671 (IHWTPYRAMYQYRPQNEDELELREGDRVDVMQQCDDGWFVGVSRRTQKFGTFPGNYVAPV). A binds to SOS region spans residues 612 to 671 (IHWTPYRAMYQYRPQNEDELELREGDRVDVMQQCDDGWFVGVSRRTQKFGTFPGNYVAPV).

In terms of assembly, interacts with DLG5 through its third SH3 domain. Interacts with vinculin by the first two SH3 domains and the proline rich region of vinculin. Binds to SOS (guanine nucleotide exchange factor of RAS and RAC), through its third SH3 domain. The formation of this complex is down-regulated by phosphorylation of SOS. Interacts with INPPL1/SHIP2, SAFB2, SOCS7 and SRCIN1. Interacts with FASLG. Interacts with MAPK1/ERK2. Post-translationally, phosphorylated at Ser-530 by MAPK1/ERK2 during cell spreading. As to expression, both isoforms are expressed in different tissues like heart, placenta, brain, skeletal muscle and pancreas. Isoform beta is especially found in liver.

The protein localises to the cell junction. It localises to the cytoplasm. It is found in the cytoskeleton. The protein resides in the nucleus. Its function is as follows. Vinexin alpha isoform promotes up-regulation of actin stress fiber formation. Vinexin beta isoform plays a role in cell spreading and enhances the activation of JNK/SAPK in response to EGF stimulation by using its third SH3 domain. This is Vinexin (SORBS3) from Homo sapiens (Human).